The primary structure comprises 132 residues: Small ribosomal subunit protein uS8 (132 aa).

Belongs to the universal ribosomal protein uS8 family. In terms of assembly, part of the 30S ribosomal subunit. Contacts proteins S5 and S12.

In terms of biological role, one of the primary rRNA binding proteins, it binds directly to 16S rRNA central domain where it helps coordinate assembly of the platform of the 30S subunit. The sequence is that of Small ribosomal subunit protein uS8 from Bacillus velezensis (strain DSM 23117 / BGSC 10A6 / LMG 26770 / FZB42) (Bacillus amyloliquefaciens subsp. plantarum).